A 274-amino-acid polypeptide reads, in one-letter code: NAD(P)H dehydrogenase [quinone] 1 (274 aa).

FAD contacts are provided by residues His-12, 18–19 (FN), and Gln-67. The residue at position 82 (Ser-82) is a Phosphoserine. 104 to 107 (LQWF) lines the FAD pocket. Residue 126 to 128 (AYT) participates in substrate binding. FAD is bound by residues 148 to 151 (TTGG), Tyr-156, and Arg-201. Residues 225–274 (PSSLFDLNFQAGFLMKKEVQDEEKNKKFGLSVGHHLGKSIPTDNQIKARK) are important for apoenzyme conformational stability. Glycyl lysine isopeptide (Lys-Gly) (interchain with G-Cter in SUMO2) cross-links involve residues Lys-250 and Lys-251.

Belongs to the NAD(P)H dehydrogenase (quinone) family. In terms of assembly, homodimer. Interacts with PDLIM4 isoform 2; this interaction stabilizes PDLIM4 isoform 2 in response to oxidative stress and protects it from ubiquitin-independent degradation by the core 20S proteasome. Interacts with TP73 (via SAM domain); this interaction is NADH-dependent, stabilizes TP73 in response to oxidative stress and protects it from ubiquitin-independent degradation by the 20S proteasome. Interacts with TP53; this interaction is NADH-dependent, stabilizes TP53 in response to oxidative stress and protects it from ubiquitin-independent degradation by the 20S proteasome. FAD serves as cofactor.

It is found in the cytoplasm. Its subcellular location is the cytosol. It carries out the reaction a quinone + NADH + H(+) = a quinol + NAD(+). The catalysed reaction is a quinone + NADPH + H(+) = a quinol + NADP(+). It catalyses the reaction ubiquinone-10 + NADH + H(+) = ubiquinol-10 + NAD(+). The enzyme catalyses menadione + NADH + H(+) = menadiol + NAD(+). In terms of biological role, flavin-containing quinone reductase that catalyzes two-electron reduction of quinones to hydroquinones using either NADH or NADPH as electron donors. In a ping-pong kinetic mechanism, the electrons are sequentially transferred from NAD(P)H to flavin cofactor and then from reduced flavin to the quinone, bypassing the formation of semiquinone and reactive oxygen species. Regulates cellular redox state primarily through quinone detoxification. Reduces components of plasma membrane redox system such as coenzyme Q and vitamin quinones, producing antioxidant hydroquinone forms. In the process may function as superoxide scavenger to prevent hydroquinone oxidation and facilitate excretion. Alternatively, can activate quinones and their derivatives by generating redox reactive hydroquinones with DNA cross-linking antitumor potential. Acts as a gatekeeper of the core 20S proteasome known to degrade proteins with unstructured regions. Upon oxidative stress, interacts with tumor suppressors TP53 and TP73 in a NADH-dependent way and inhibits their ubiquitin-independent degradation by the 20S proteasome. This chain is NAD(P)H dehydrogenase [quinone] 1 (NQO1), found in Pongo abelii (Sumatran orangutan).